A 156-amino-acid polypeptide reads, in one-letter code: 6,7-dimethyl-8-ribityllumazine synthase (156 aa).

5-amino-6-(D-ribitylamino)uracil-binding positions include phenylalanine 23, 57 to 59 (AYE), and 81 to 83 (AII). 86 to 87 (GT) lines the (2S)-2-hydroxy-3-oxobutyl phosphate pocket. Histidine 89 serves as the catalytic Proton donor. A 5-amino-6-(D-ribitylamino)uracil-binding site is contributed by phenylalanine 114. Arginine 128 contacts (2S)-2-hydroxy-3-oxobutyl phosphate.

It belongs to the DMRL synthase family.

It catalyses the reaction (2S)-2-hydroxy-3-oxobutyl phosphate + 5-amino-6-(D-ribitylamino)uracil = 6,7-dimethyl-8-(1-D-ribityl)lumazine + phosphate + 2 H2O + H(+). Its pathway is cofactor biosynthesis; riboflavin biosynthesis; riboflavin from 2-hydroxy-3-oxobutyl phosphate and 5-amino-6-(D-ribitylamino)uracil: step 1/2. Catalyzes the formation of 6,7-dimethyl-8-ribityllumazine by condensation of 5-amino-6-(D-ribitylamino)uracil with 3,4-dihydroxy-2-butanone 4-phosphate. This is the penultimate step in the biosynthesis of riboflavin. In Helicobacter pylori (strain J99 / ATCC 700824) (Campylobacter pylori J99), this protein is 6,7-dimethyl-8-ribityllumazine synthase.